Consider the following 114-residue polypeptide: T cell receptor beta variable 9 (114 aa).

A signal peptide spans Met1–Ser21. Residues Gly22 to Val114 enclose the Ig-like domain. A disulfide bond links Cys42 and Cys110. An N-linked (GlcNAc...) asparagine glycan is attached at Asn96.

As to quaternary structure, alpha-beta TR is a heterodimer composed of an alpha and beta chain; disulfide-linked. The alpha-beta TR is associated with the transmembrane signaling CD3 coreceptor proteins to form the TR-CD3 (TcR or TCR). The assembly of alpha-beta TR heterodimers with CD3 occurs in the endoplasmic reticulum where a single alpha-beta TR heterodimer associates with one CD3D-CD3E heterodimer, one CD3G-CD3E heterodimer and one CD247 homodimer forming a stable octameric structure. CD3D-CD3E and CD3G-CD3E heterodimers preferentially associate with TR alpha and TR beta chains, respectively. The association of the CD247 homodimer is the last step of TcR assembly in the endoplasmic reticulum and is required for transport to the cell surface.

The protein localises to the cell membrane. Its function is as follows. V region of the variable domain of T cell receptor (TR) beta chain that participates in the antigen recognition. Alpha-beta T cell receptors are antigen specific receptors which are essential to the immune response and are present on the cell surface of T lymphocytes. Recognize peptide-major histocompatibility (MH) (pMH) complexes that are displayed by antigen presenting cells (APC), a prerequisite for efficient T cell adaptive immunity against pathogens. Binding of alpha-beta TR to pMH complex initiates TR-CD3 clustering on the cell surface and intracellular activation of LCK that phosphorylates the ITAM motifs of CD3G, CD3D, CD3E and CD247 enabling the recruitment of ZAP70. In turn ZAP70 phosphorylates LAT, which recruits numerous signaling molecules to form the LAT signalosome. The LAT signalosome propagates signal branching to three major signaling pathways, the calcium, the mitogen-activated protein kinase (MAPK) kinase and the nuclear factor NF-kappa-B (NF-kB) pathways, leading to the mobilization of transcription factors that are critical for gene expression and essential for T cell growth and differentiation. The T cell repertoire is generated in the thymus, by V-(D)-J rearrangement. This repertoire is then shaped by intrathymic selection events to generate a peripheral T cell pool of self-MH restricted, non-autoaggressive T cells. Post-thymic interaction of alpha-beta TR with the pMH complexes shapes TR structural and functional avidity. This is T cell receptor beta variable 9 from Homo sapiens (Human).